Consider the following 622-residue polypeptide: Putative DEAD-box ATP-dependent RNA helicase 44 (622 aa).

A disordered region spans residues 50–97 (DRRSIVQISRSNSDNDDGNRPRDVKRERHRSHDHDRNRESDREFRERE). Positions 66–97 (DGNRPRDVKRERHRSHDHDRNRESDREFRERE) are enriched in basic and acidic residues. A Helicase ATP-binding domain is found at 241–436 (IPLGLEQRDV…RKFLRNPVVV (196 aa)). Position 254–261 (254–261 (SATGSGKT)) interacts with ATP. The DEAD box motif lies at 367–370 (DEAD). The Helicase C-terminal domain occupies 460–606 (RLKKLIDDLG…LVPPELARHE (147 aa)).

This sequence belongs to the DEAD box helicase family. DDX23/PRP28 subfamily.

It catalyses the reaction ATP + H2O = ADP + phosphate + H(+). This is Putative DEAD-box ATP-dependent RNA helicase 44 (RH44) from Arabidopsis thaliana (Mouse-ear cress).